Here is a 409-residue protein sequence, read N- to C-terminus: Tyrosine--tRNA ligase (409 aa).

Y35 lines the L-tyrosine pocket. The short motif at 40 to 49 is the 'HIGH' region element; it reads CTAESLHVGS. L-tyrosine contacts are provided by Y172 and Q176. A 'KMSKS' region motif is present at residues 232 to 236; it reads KMGKT. ATP is bound at residue K235. Residues 343–409 enclose the S4 RNA-binding domain; sequence ISILDLVILS…KKKHIKVELI (67 aa).

This sequence belongs to the class-I aminoacyl-tRNA synthetase family. TyrS type 1 subfamily. As to quaternary structure, homodimer.

The protein localises to the cytoplasm. The catalysed reaction is tRNA(Tyr) + L-tyrosine + ATP = L-tyrosyl-tRNA(Tyr) + AMP + diphosphate + H(+). Catalyzes the attachment of tyrosine to tRNA(Tyr) in a two-step reaction: tyrosine is first activated by ATP to form Tyr-AMP and then transferred to the acceptor end of tRNA(Tyr). The protein is Tyrosine--tRNA ligase of Pelagibacter ubique (strain HTCC1062).